The following is a 334-amino-acid chain: Protein-methionine-sulfoxide reductase catalytic subunit MsrP (334 aa).

A signal peptide (tat-type signal) is located at residues 1–44 (MKKNQFLKESDVTAESVFFMKRRQVLKALGISATALSLPHAAHA). Mo-molybdopterin is bound by residues Asn-88, 91–92 (YE), Cys-146, Thr-181, Asn-233, Arg-238, and 249–251 (GIK).

This sequence belongs to the MsrP family. Heterodimer of a catalytic subunit (MsrP) and a heme-binding subunit (MsrQ). Requires Mo-molybdopterin as cofactor. In terms of processing, predicted to be exported by the Tat system. The position of the signal peptide cleavage has not been experimentally proven.

Its subcellular location is the periplasm. The enzyme catalyses L-methionyl-[protein] + a quinone + H2O = L-methionyl-(S)-S-oxide-[protein] + a quinol. It carries out the reaction L-methionyl-[protein] + a quinone + H2O = L-methionyl-(R)-S-oxide-[protein] + a quinol. Its function is as follows. Part of the MsrPQ system that repairs oxidized periplasmic proteins containing methionine sulfoxide residues (Met-O), using respiratory chain electrons. Thus protects these proteins from oxidative-stress damage caused by reactive species of oxygen and chlorine generated by the host defense mechanisms. MsrPQ is essential for the maintenance of envelope integrity under bleach stress, rescuing a wide series of structurally unrelated periplasmic proteins from methionine oxidation, including the primary periplasmic chaperone SurA and the lipoprotein Pal. The catalytic subunit MsrP is non-stereospecific, being able to reduce both (R-) and (S-) diastereoisomers of methionine sulfoxide. This is Protein-methionine-sulfoxide reductase catalytic subunit MsrP from Escherichia coli (strain K12 / MC4100 / BW2952).